A 269-amino-acid polypeptide reads, in one-letter code: Lck-interacting transmembrane adapter 1 (269 aa).

At 1–7 (MRPPVPS) the chain is on the extracellular side. The chain crosses the membrane as a helical; Signal-anchor for type III membrane protein span at residues 8–28 (APLALWVLGCFSLLLWLWALC). Residues Cys28 and Cys31 are each lipidated (S-palmitoyl cysteine). The Cytoplasmic segment spans residues 29–269 (TACHRKRAQR…VYESIKEMGL (241 aa)). The interval 102–133 (STRSQVPNSAFPPRQLPRAPPAAPATAPSTSS) is disordered. Pro residues predominate over residues 115 to 124 (RQLPRAPPAA). A phosphotyrosine mark is found at Tyr137, Tyr175, and Tyr207. The tract at residues 137–140 (YSNV) is interaction with GRB2. Interaction with CSK stretches follow at residues 175–178 (YACI) and 207–210 (YSRV). Phosphotyrosine; by LYN or LCK is present on residues Tyr242 and Tyr261. The tract at residues 242-245 (YEAI) is interaction with LCK and PIK3R1. An interaction with LCK, PLCG2 and PIK3R1 region spans residues 261–264 (YESI). Ser263 carries the phosphoserine modification.

In terms of assembly, when phosphorylated in response to TCR stimulation and/or CD4 costimulation, interacts with LCK, CSK, FYN, PTPN11/SHP2, GRB2, PIK3R1 and GRAP2. When phosphorylated in response to BCR activation, interacts with LYN, PIK3R1, PLCG2 and GRB2. Post-translationally, palmitoylation of Cys-28 and Cys-31 is required for raft targeting. Phosphorylated on tyrosines upon TCR activation and/or CD4 coreceptor stimulation, or upon BCR stimulation; which leads to the recruitment of SH2-containing proteins. In terms of tissue distribution, expressed in spleen and lung. Present in primary B-cells and peripheral T-cells (at protein level).

Its subcellular location is the cell membrane. In terms of biological role, involved in BCR (B-cell antigen receptor)-mediated signaling in B-cells and TCR (T-cell antigen receptor)-mediated T-cell signaling in T-cells. In absence of TCR signaling, may be involved in CD4-mediated inhibition of T-cell activation. Couples activation of these receptors and their associated kinases with distal intracellular events such as calcium mobilization or MAPK activation through the recruitment of PLCG2, GRB2, GRAP2, and other signaling molecules. This chain is Lck-interacting transmembrane adapter 1 (Lime1), found in Mus musculus (Mouse).